Here is a 206-residue protein sequence, read N- to C-terminus: Small ribosomal subunit protein uS4 (206 aa).

In terms of domain architecture, S4 RNA-binding spans 96 to 156 (CRLDNVVYRM…EKSKNQLRIA (61 aa)).

This sequence belongs to the universal ribosomal protein uS4 family. As to quaternary structure, part of the 30S ribosomal subunit. Contacts protein S5. The interaction surface between S4 and S5 is involved in control of translational fidelity.

In terms of biological role, one of the primary rRNA binding proteins, it binds directly to 16S rRNA where it nucleates assembly of the body of the 30S subunit. Its function is as follows. With S5 and S12 plays an important role in translational accuracy. The protein is Small ribosomal subunit protein uS4 of Pseudomonas aeruginosa (strain LESB58).